Here is a 227-residue protein sequence, read N- to C-terminus: Adapter protein MecA 1 (227 aa).

This sequence belongs to the MecA family. As to quaternary structure, homodimer.

Functionally, enables the recognition and targeting of unfolded and aggregated proteins to the ClpC protease or to other proteins involved in proteolysis. Acts negatively in the development of competence by binding ComK and recruiting it to the ClpCP protease. When overexpressed, inhibits sporulation. Also involved in Spx degradation by ClpC. This is Adapter protein MecA 1 (mecA1) from Bacillus cereus (strain ATCC 14579 / DSM 31 / CCUG 7414 / JCM 2152 / NBRC 15305 / NCIMB 9373 / NCTC 2599 / NRRL B-3711).